A 413-amino-acid polypeptide reads, in one-letter code: Putative F-box protein At3g23970 (413 aa).

Residues 1-42 enclose the F-box domain; that stretch reads MNIPPELTFEVLVRLPLKSLARFRSVRKEWKLVIDSEFFRDC.

The protein is Putative F-box protein At3g23970 of Arabidopsis thaliana (Mouse-ear cress).